We begin with the raw amino-acid sequence, 233 residues long: uncharacterized protein (233 aa).

The 69-residue stretch at 16–84 (KTLAKQVIER…TRGGTYFNDK (69 aa)) folds into the HTH gntR-type domain. Residues 44–63 (EMELMDILHVSRPVLREALS) constitute a DNA-binding region (H-T-H motif).

This is an uncharacterized protein from Bacillus subtilis (strain 168).